The sequence spans 329 residues: Probable carboxylesterase 13 (329 aa).

The residue at position 1 (methionine 1) is an N-acetylmethionine. An Involved in the stabilization of the negatively charged intermediate by the formation of the oxyanion hole motif is present at residues histidine 81–glycine 83. Catalysis depends on residues serine 165, aspartate 269, and histidine 302.

The protein belongs to the 'GDXG' lipolytic enzyme family. In terms of tissue distribution, expressed in flowers.

The catalysed reaction is a carboxylic ester + H2O = an alcohol + a carboxylate + H(+). Functionally, carboxylesterase acting on esters with varying acyl chain length. This is Probable carboxylesterase 13 (CXE13) from Arabidopsis thaliana (Mouse-ear cress).